Reading from the N-terminus, the 447-residue chain is Ameloblastin (447 aa).

The N-terminal stretch at 1 to 26 (MSASKIPLFKMKDLILILCLLEMSFA) is a signal peptide. Position 37 is a hydroxyproline (P37). At S43 the chain carries Phosphoserine. An O-linked (GalNAc...) serine glycan is attached at S112. Disordered stretches follow at residues 165–211 (QQVA…DFAD), 307–338 (DSPV…NLEN), and 353–383 (LLAL…PAAA). 2 tandem repeats follow at residues 189 to 201 (PSLP…DPQG) and 202 to 214 (PSLP…DPQG).

This sequence belongs to the ameloblastin family. In terms of tissue distribution, ameloblast-specific. Located at the Tomes processes of secretory ameloblasts and in the sheath space between rod-interrod enamel.

Its subcellular location is the secreted. It is found in the extracellular space. It localises to the extracellular matrix. Its function is as follows. Involved in the mineralization and structural organization of enamel. The sequence is that of Ameloblastin (AMBN) from Homo sapiens (Human).